The sequence spans 105 residues: Death-associated protein 1 homolog (105 aa).

Residues 75-105 (AAQVAHQKPVPSAQKLPAGQHLNQHIHQPRK) are disordered. Positions 95–105 (HLNQHIHQPRK) are enriched in polar residues.

This sequence belongs to the DAP-DAPL1 family. As to quaternary structure, associates with ribosomes; inhibiting translation. Interacts with eiF5a (eif5a and eif5a2); inhibiting translation.

Functionally, ribosome-binding protein involved in ribosome hibernation, a process during which ribosomes are stabilized in an inactive state and preserved from proteasomal degradation. Acts via its association with eiF5a (eif5a and eif5a2) at the polypeptide exit tunnel of the ribosome, preventing mRNA translation. Involved in ribosome hibernation in the mature egg by preventing mRNA translation, leading to ribosome inactivation. Ribosomes, which are produced in large quantities during oogenesis, are stored and translationally repressed in the egg and early embryo. Compared to dap1b, binds and inactivates ribosomes less efficiently. The sequence is that of Death-associated protein 1 homolog from Danio rerio (Zebrafish).